Here is a 191-residue protein sequence, read N- to C-terminus: Protein GrpE (191 aa).

Basic and acidic residues predominate over residues 1–10 (MNHEEQKVET). The tract at residues 1-28 (MNHEEQKVETMEQVEAQPVEPTDVDSEV) is disordered.

It belongs to the GrpE family. Homodimer.

The protein resides in the cytoplasm. Functionally, participates actively in the response to hyperosmotic and heat shock by preventing the aggregation of stress-denatured proteins, in association with DnaK and GrpE. It is the nucleotide exchange factor for DnaK and may function as a thermosensor. Unfolded proteins bind initially to DnaJ; upon interaction with the DnaJ-bound protein, DnaK hydrolyzes its bound ATP, resulting in the formation of a stable complex. GrpE releases ADP from DnaK; ATP binding to DnaK triggers the release of the substrate protein, thus completing the reaction cycle. Several rounds of ATP-dependent interactions between DnaJ, DnaK and GrpE are required for fully efficient folding. The polypeptide is Protein GrpE (Aeromonas salmonicida (strain A449)).